The chain runs to 497 residues: Probable cytosol aminopeptidase (497 aa).

Residues Lys-263 and Asp-268 each contribute to the Mn(2+) site. Lys-275 is a catalytic residue. Mn(2+)-binding residues include Asp-286, Asp-345, and Glu-347. Arg-349 is an active-site residue.

The protein belongs to the peptidase M17 family. It depends on Mn(2+) as a cofactor.

It localises to the cytoplasm. It catalyses the reaction Release of an N-terminal amino acid, Xaa-|-Yaa-, in which Xaa is preferably Leu, but may be other amino acids including Pro although not Arg or Lys, and Yaa may be Pro. Amino acid amides and methyl esters are also readily hydrolyzed, but rates on arylamides are exceedingly low.. It carries out the reaction Release of an N-terminal amino acid, preferentially leucine, but not glutamic or aspartic acids.. Its function is as follows. Presumably involved in the processing and regular turnover of intracellular proteins. Catalyzes the removal of unsubstituted N-terminal amino acids from various peptides. The protein is Probable cytosol aminopeptidase of Agrobacterium fabrum (strain C58 / ATCC 33970) (Agrobacterium tumefaciens (strain C58)).